A 544-amino-acid polypeptide reads, in one-letter code: NAD(P)H-quinone oxidoreductase chain 4 (544 aa).

14 helical membrane-spanning segments follow: residues 29–49, 60–80, 115–135, 139–159, 161–181, 193–213, 234–254, 268–288, 302–322, 339–359, 360–380, 400–422, 442–462, and 488–508; these read FPWL…IPLV, WYAL…YLNG, LILL…PVTF, LFFF…AVQD, LLFF…LAIW, FILY…AMAF, GFQA…LPIV, TAPV…YALF, FAPL…LTSF, MGFV…GAML, QMIS…ATYD, MFAM…GFVS, IVID…LLSM, and IYII…PKLV.

It belongs to the complex I subunit 4 family.

It is found in the cellular thylakoid membrane. The enzyme catalyses a plastoquinone + NADH + (n+1) H(+)(in) = a plastoquinol + NAD(+) + n H(+)(out). It carries out the reaction a plastoquinone + NADPH + (n+1) H(+)(in) = a plastoquinol + NADP(+) + n H(+)(out). NDH-1 shuttles electrons from NAD(P)H, via FMN and iron-sulfur (Fe-S) centers, to quinones in the respiratory chain. The immediate electron acceptor for the enzyme in this species is believed to be plastoquinone. Couples the redox reaction to proton translocation (for every two electrons transferred, four hydrogen ions are translocated across the cytoplasmic membrane), and thus conserves the redox energy in a proton gradient. This Synechococcus sp. (strain RCC307) protein is NAD(P)H-quinone oxidoreductase chain 4.